A 139-amino-acid polypeptide reads, in one-letter code: Maximins 4/H3 type 7 (139 aa).

A signal peptide spans 1–18; the sequence is MNFKYIVAVSFLIASAYA. The propeptide occupies 19–43; it reads RSVQNDEQSLSQRDVLEEESLREIR. Asparagine amide is present on Asn-70. Residues 74 to 118 constitute a propeptide that is removed on maturation; that stretch reads TAEDHEVMKRLEAIMRDLDSLDYPEEASERETRGFNQDEIAKEKR. Residue Ile-138 is modified to Isoleucine amide.

This sequence belongs to the bombinin family. As to expression, expressed by the skin glands.

It localises to the secreted. In terms of biological role, maximin-4 shows antibacterial activity against both Gram-positive and Gram-negative bacteria. It also shows antimicrobial activity against the fungus C.albicans, but not against A.flavus nor P.uticale. It has little hemolytic activity. It does not possess a significant cytotoxicity against tumor cell lines. It does not possess a significant anti-HIV activity. Its function is as follows. Maximin-H3 shows antibacterial activity against both Gram-positive and Gram-negative bacteria. It also shows antimicrobial activity against the fungus C.albicans. Shows strong hemolytic activity. The protein is Maximins 4/H3 type 7 of Bombina maxima (Giant fire-bellied toad).